Reading from the N-terminus, the 220-residue chain is Thiamine-phosphate synthase (220 aa).

4-amino-2-methyl-5-(diphosphooxymethyl)pyrimidine is bound by residues 47-51 (QYREK) and Asn78. Positions 79 and 98 each coordinate Mg(2+). 4-amino-2-methyl-5-(diphosphooxymethyl)pyrimidine is bound at residue Ser117. 143-145 (TAT) provides a ligand contact to 2-[(2R,5Z)-2-carboxy-4-methylthiazol-5(2H)-ylidene]ethyl phosphate. A 4-amino-2-methyl-5-(diphosphooxymethyl)pyrimidine-binding site is contributed by Lys146. 2-[(2R,5Z)-2-carboxy-4-methylthiazol-5(2H)-ylidene]ethyl phosphate-binding positions include Gly174 and 194-195 (IS).

The protein belongs to the thiamine-phosphate synthase family. Mg(2+) is required as a cofactor.

It carries out the reaction 2-[(2R,5Z)-2-carboxy-4-methylthiazol-5(2H)-ylidene]ethyl phosphate + 4-amino-2-methyl-5-(diphosphooxymethyl)pyrimidine + 2 H(+) = thiamine phosphate + CO2 + diphosphate. It catalyses the reaction 2-(2-carboxy-4-methylthiazol-5-yl)ethyl phosphate + 4-amino-2-methyl-5-(diphosphooxymethyl)pyrimidine + 2 H(+) = thiamine phosphate + CO2 + diphosphate. The enzyme catalyses 4-methyl-5-(2-phosphooxyethyl)-thiazole + 4-amino-2-methyl-5-(diphosphooxymethyl)pyrimidine + H(+) = thiamine phosphate + diphosphate. Its pathway is cofactor biosynthesis; thiamine diphosphate biosynthesis; thiamine phosphate from 4-amino-2-methyl-5-diphosphomethylpyrimidine and 4-methyl-5-(2-phosphoethyl)-thiazole: step 1/1. Condenses 4-methyl-5-(beta-hydroxyethyl)thiazole monophosphate (THZ-P) and 2-methyl-4-amino-5-hydroxymethyl pyrimidine pyrophosphate (HMP-PP) to form thiamine monophosphate (TMP). The polypeptide is Thiamine-phosphate synthase (Methanosarcina barkeri (strain Fusaro / DSM 804)).